The following is a 62-amino-acid chain: Large ribosomal subunit protein bL28 (62 aa).

It belongs to the bacterial ribosomal protein bL28 family.

This is Large ribosomal subunit protein bL28 from Wolinella succinogenes (strain ATCC 29543 / DSM 1740 / CCUG 13145 / JCM 31913 / LMG 7466 / NCTC 11488 / FDC 602W) (Vibrio succinogenes).